The primary structure comprises 439 residues: Lipid-A-disaccharide synthase (439 aa).

The protein belongs to the LpxB family.

It carries out the reaction a lipid X + a UDP-2-N,3-O-bis[(3R)-3-hydroxyacyl]-alpha-D-glucosamine = a lipid A disaccharide + UDP + H(+). Its pathway is bacterial outer membrane biogenesis; LPS lipid A biosynthesis. In terms of biological role, condensation of UDP-2,3-diacylglucosamine and 2,3-diacylglucosamine-1-phosphate to form lipid A disaccharide, a precursor of lipid A, a phosphorylated glycolipid that anchors the lipopolysaccharide to the outer membrane of the cell. This is Lipid-A-disaccharide synthase from Xanthomonas axonopodis pv. citri (strain 306).